A 499-amino-acid chain; its full sequence is Calcium/calmodulin-dependent protein kinase type II subunit delta (499 aa).

Ala-2 is modified (N-acetylalanine). Residues 14–272 (YQLFEELGKG…ASEALKHPWI (259 aa)) form the Protein kinase domain. ATP is bound by residues 20–28 (LGKGAFSVV) and Lys-43. The active-site Proton acceptor is the Asp-136. The segment at 283–292 (HRQETVDCLK) is autoinhibitory domain. A Phosphothreonine; by autocatalysis modification is found at Thr-287. Residues 291-301 (LKKFNARRKLK) form a calmodulin-binding region. Residues Thr-306 and Thr-307 each carry the phosphothreonine; by autocatalysis modification. At Ser-315 the chain carries Phosphoserine. The residue at position 318 (Lys-318) is an N6-acetyllysine. Residues Ser-319 and Ser-330 each carry the phosphoserine modification. Position 331 is a phosphothreonine (Thr-331). Ser-333 carries the post-translational modification Phosphoserine. Thr-336 and Thr-337 each carry phosphothreonine. Ser-404, Ser-490, and Ser-494 each carry phosphoserine.

Belongs to the protein kinase superfamily. CAMK Ser/Thr protein kinase family. CaMK subfamily. CAMK2 is composed of 4 different chains: alpha (CAMK2A), beta (CAMK2B), gamma (CAMK2G), and delta (CAMK2D). The different isoforms assemble into homo- or heteromultimeric holoenzymes composed of 12 subunits with two hexameric rings stacked one on top of the other. Interacts with RRAD and CACNB2. Post-translationally, autophosphorylation of Thr-287 following activation by Ca(2+)/calmodulin. Phosphorylation of Thr-287 locks the kinase into an activated state. Expressed in cardiac muscle and skeletal muscle. Isoform Delta 3, isoform Delta 2, isoform Delta 8 and isoform Delta 9 are expressed in cardiac muscle. Isoform Delta 11 is expressed in skeletal muscle.

The protein resides in the cell membrane. The protein localises to the sarcolemma. It localises to the sarcoplasmic reticulum membrane. It catalyses the reaction L-seryl-[protein] + ATP = O-phospho-L-seryl-[protein] + ADP + H(+). The enzyme catalyses L-threonyl-[protein] + ATP = O-phospho-L-threonyl-[protein] + ADP + H(+). With respect to regulation, activated by Ca(2+)/calmodulin. Binding of calmodulin results in conformational change that relieves intrasteric autoinhibition and allows autophosphorylation of Thr-287 which turns the kinase in a constitutively active form and confers to the kinase a Ca(2+)-independent activity. In terms of biological role, calcium/calmodulin-dependent protein kinase involved in the regulation of Ca(2+) homeostatis and excitation-contraction coupling (ECC) in heart by targeting ion channels, transporters and accessory proteins involved in Ca(2+) influx into the myocyte, Ca(2+) release from the sarcoplasmic reticulum (SR), SR Ca(2+) uptake and Na(+) and K(+) channel transport. Targets also transcription factors and signaling molecules to regulate heart function. In its activated form, is involved in the pathogenesis of dilated cardiomyopathy and heart failure. Contributes to cardiac decompensation and heart failure by regulating SR Ca(2+) release via direct phosphorylation of RYR2 Ca(2+) channel on 'Ser-2808'. In the nucleus, phosphorylates the MEF2 repressor HDAC4, promoting its nuclear export and binding to 14-3-3 protein, and expression of MEF2 and genes involved in the hypertrophic program. Is essential for left ventricular remodeling responses to myocardial infarction. In pathological myocardial remodeling acts downstream of the beta adrenergic receptor signaling cascade to regulate key proteins involved in ECC. Regulates Ca(2+) influx to myocytes by binding and phosphorylating the L-type Ca(2+) channel subunit beta-2 CACNB2. In addition to Ca(2+) channels, can target and regulate the cardiac sarcolemmal Na(+) channel Nav1.5/SCN5A and the K+ channel Kv4.3/KCND3, which contribute to arrhythmogenesis in heart failure. Phosphorylates phospholamban (PLN/PLB), an endogenous inhibitor of SERCA2A/ATP2A2, contributing to the enhancement of SR Ca(2+) uptake that may be important in frequency-dependent acceleration of relaxation (FDAR) and maintenance of contractile function during acidosis. May participate in the modulation of skeletal muscle function in response to exercise, by regulating SR Ca(2+) transport through phosphorylation of PLN/PLB and triadin, a ryanodine receptor-coupling factor. In response to interferon-gamma (IFN-gamma) stimulation, catalyzes phosphorylation of STAT1, stimulating the JAK-STAT signaling pathway. The chain is Calcium/calmodulin-dependent protein kinase type II subunit delta (CAMK2D) from Homo sapiens (Human).